The chain runs to 360 residues: Peptide chain release factor 1 (360 aa).

Gln235 carries the N5-methylglutamine modification. Positions 285–314 (KRQQAEASTRRNLLGSGDRSDRNRTYNFPQ) are disordered.

Belongs to the prokaryotic/mitochondrial release factor family. In terms of processing, methylated by PrmC. Methylation increases the termination efficiency of RF1.

It localises to the cytoplasm. In terms of biological role, peptide chain release factor 1 directs the termination of translation in response to the peptide chain termination codons UAG and UAA. The sequence is that of Peptide chain release factor 1 from Klebsiella pneumoniae subsp. pneumoniae (strain ATCC 700721 / MGH 78578).